The sequence spans 961 residues: SH3 domain-binding protein 4 (961 aa).

Residues 55-114 (GNAKEVIAIKDYCPNNFTTLKFSKGDHLYVLDTSGGEWWYAHNTTEMGYIPSSYVQPLNY) enclose the SH3 1 domain. Phosphoserine is present on residues Ser-131, Ser-244, Ser-249, Ser-277, and Ser-294. A ZU5 domain is found at 315-452 (TNIVCKLDSS…LEPCMYLAIV (138 aa)). A Phosphoserine modification is found at Ser-635. In terms of domain architecture, SH3 2 spans 652 to 722 (SSLKFGKLLK…HTKNVLVVGK (71 aa)).

Homodimer or homooligomer. Interacts with DNM2, EPS15, clathrin, the adapter protein complex 2/AP-2 and TFRC. Interacts with the Rag GTPases RRAGA, RRAGB, RRAGC and RRAGD; the interaction is most probably direct, preferentially occurs with their inactive GDP-bound form and is negatively regulated by amino acids. In terms of processing, phosphorylated upon EGF stimulation. Phosphorylation prevents interaction with DNM2.

The protein localises to the membrane. The protein resides in the clathrin-coated pit. Its subcellular location is the cytoplasmic vesicle. It localises to the clathrin-coated vesicle. It is found in the nucleus. In terms of biological role, may function in transferrin receptor internalization at the plasma membrane through a cargo-specific control of clathrin-mediated endocytosis. Alternatively, may act as a negative regulator of the amino acid-induced TOR signaling by inhibiting the formation of active Rag GTPase complexes. Preferentially binds inactive Rag GTPase complexes and prevents their interaction with the mTORC1 complex inhibiting its relocalization to lysosomes and its activation. Thereby, may indirectly regulate cell growth, proliferation and autophagy. In Rattus norvegicus (Rat), this protein is SH3 domain-binding protein 4 (Sh3bp4).